The sequence spans 48 residues: ATP synthase protein 8 (48 aa).

A helical membrane pass occupies residues 4 to 24; sequence LVPFFFVNQVVFAFIVLTVLI.

This sequence belongs to the ATPase protein 8 family. In terms of assembly, F-type ATPases have 2 components, CF(1) - the catalytic core - and CF(0) - the membrane proton channel.

The protein resides in the mitochondrion membrane. Mitochondrial membrane ATP synthase (F(1)F(0) ATP synthase or Complex V) produces ATP from ADP in the presence of a proton gradient across the membrane which is generated by electron transport complexes of the respiratory chain. F-type ATPases consist of two structural domains, F(1) - containing the extramembraneous catalytic core and F(0) - containing the membrane proton channel, linked together by a central stalk and a peripheral stalk. During catalysis, ATP synthesis in the catalytic domain of F(1) is coupled via a rotary mechanism of the central stalk subunits to proton translocation. Part of the complex F(0) domain. Minor subunit located with subunit a in the membrane. The protein is ATP synthase protein 8 (atp8) of Emericella nidulans (Aspergillus nidulans).